Consider the following 471-residue polypeptide: 4-aminobutyrate aminotransferase (471 aa).

135-136 (GA) lines the pyridoxal 5'-phosphate pocket. Position 192 (Arg-192) interacts with substrate. Lys-326 bears the N6-(pyridoxal phosphate)lysine mark. Thr-351 is a pyridoxal 5'-phosphate binding site.

The protein belongs to the class-III pyridoxal-phosphate-dependent aminotransferase family. As to quaternary structure, homodimer and homotetramer. Pyridoxal 5'-phosphate serves as cofactor.

The protein localises to the cytoplasm. The catalysed reaction is 4-aminobutanoate + 2-oxoglutarate = succinate semialdehyde + L-glutamate. Its function is as follows. Required for the degradation of gamma-aminobutyric acid (GABA), which is important for utilization of GABA as nitrogen source and for oxidative stress tolerance. Deaminates GABA to succinate semialdehyde, which in turn is converted to succinate by the succinate-semialdehyde dehydrogenase UGA2. Cannot transaminate beta-alanine (BAL). The protein is 4-aminobutyrate aminotransferase (UGA1) of Saccharomyces cerevisiae (strain ATCC 204508 / S288c) (Baker's yeast).